Reading from the N-terminus, the 92-residue chain is LYR motif-containing protein 4 homolog (92 aa).

A coiled-coil region spans residues 48–68; sequence AEIDRQMAEGQQNLELIRRQV.

Belongs to the complex I LYR family. In terms of assembly, component of the mitochondrial core iron-sulfur cluster (ISC) assembly complex at least composed of the cysteine desulfurase Nfs1, the scaffold protein IscU, the accessory protein bcn92/Isd11/Lyrm4, and probably fh/frataxin. Interacts with Nfs1.

It is found in the mitochondrion. Functionally, stabilizing factor of the core iron-sulfur cluster (ISC) assembly complex that regulates the stability and cysteine desulfurase activity of Nfs1 and participates in the [2Fe-2S] clusters assembly on the scaffolding protein IscU. The chain is LYR motif-containing protein 4 homolog from Drosophila melanogaster (Fruit fly).